A 449-amino-acid chain; its full sequence is MDVLGWLLLPLLLLCTQPHHGARAMNDIGDYVGSNLEISWLPNLDGLMEGYARNFRPGIGGPPVNVALALEVASIDHISEANMEYTMTVFLHQSWRDSRLSYNHTNETLGLDSRFVDKLWLPDTFIVNAKSAWFHDVTVENKLIRLQPDGVILYSIRITSTVACDMDLAKYPMDEQECMLDLESYGYSSEDIVYYWSENQEQIHGLDRLQLAQFTITSYRFTTELMNFKSAGQFPRLSLHFQLRRNRGVYIIQSYMPSVLLVAMSWVSFWISQAAVPARVSLGITTVLTMTTLMVSARSSLPRASAIKALDVYFWICYVFVFAALVEYAFAHFNADYRKKRKAKVKVTKPRAEMDVRNAIVLFSLSAAGVSQELAISRRQGRVPGNLMGSYRSVEVEAKKEGGSRPGGPGGIRSRLKPIDADTIDIYARAVFPAAFAAVNIIYWAAYTM.

The signal sequence occupies residues 1–24; the sequence is MDVLGWLLLPLLLLCTQPHHGARA. Residues 25-251 are Extracellular-facing; it reads MNDIGDYVGS…QLRRNRGVYI (227 aa). N-linked (GlcNAc...) asparagine glycosylation is found at Asn-103 and Asn-106. Cys-164 and Cys-178 are joined by a disulfide. The helical transmembrane segment at 252-271 threads the bilayer; sequence IQSYMPSVLLVAMSWVSFWI. The Cytoplasmic portion of the chain corresponds to 272 to 275; sequence SQAA. A helical transmembrane segment spans residues 276 to 298; the sequence is VPARVSLGITTVLTMTTLMVSAR. The Extracellular portion of the chain corresponds to 299–308; the sequence is SSLPRASAIK. The chain crosses the membrane as a helical span at residues 309 to 331; sequence ALDVYFWICYVFVFAALVEYAFA. Over 332–423 the chain is Cytoplasmic; that stretch reads HFNADYRKKR…SRLKPIDADT (92 aa). The residue at position 390 (Ser-390) is a Phosphoserine. A helical membrane pass occupies residues 424–446; that stretch reads IDIYARAVFPAAFAAVNIIYWAA. The Extracellular segment spans residues 447–449; sequence YTM.

Belongs to the ligand-gated ion channel (TC 1.A.9) family. Gamma-aminobutyric acid receptor (TC 1.A.9.5) subfamily. GABRD sub-subfamily. As to quaternary structure, heteropentamer, formed by a combination of alpha (GABRA1-6), beta (GABRB1-3), gamma (GABRG1-3), delta (GABRD), epsilon (GABRE), rho (GABRR1-3), pi (GABRP) and theta (GABRQ) chains, each subunit exhibiting distinct physiological and pharmacological properties. In terms of tissue distribution, found in the brain, in cerebellar granule cells. Expressed in lungs, in alveolar epithelium.

It is found in the cell membrane. It catalyses the reaction chloride(in) = chloride(out). Its function is as follows. Delta subunit of the heteropentameric ligand-gated chloride channel gated by gamma-aminobutyric acid (GABA), a major inhibitory neurotransmitter in the brain. GABA-gated chloride channels, also named GABA(A) receptors (GABAAR), consist of five subunits arranged around a central pore and contain GABA active binding site(s) located at the alpha and beta subunit interface(s). When activated by GABA, GABAARs selectively allow the flow of chloride anions across the cell membrane down their electrochemical gradient. GABAARs containing delta/GABRD subunits are predominantly expressed and located in extrasynaptic or perisynaptic positions on hippocampus and cerebellar granule cells, and contribute to the tonic GABAergic inhibition. GABAAR containing alpha-4-beta-3-delta subunits can simultaneously bind GABA and histamine where histamine binds at the interface of two neighboring beta subunits, which may be involved in the regulation of sleep and wakefulness. This is Gamma-aminobutyric acid receptor subunit delta from Rattus norvegicus (Rat).